We begin with the raw amino-acid sequence, 1579 residues long: MLVKVPILGRETIHVGYGVRSHIVETIVGLKSSTYVVINDSNVGRVPYFQELLSDFEAQLPAGSRLLRYVVKPGEANKTRATKEQIEDYLLSEGCTRDTVIVAVGGGIIGDMIGYVAATFMRGVRVVQVPTSLLAMVDSSIGGKTAVDTPLGKNFIGAFWQPEFVLVDIKWLQSLPKREFINGMAEVIKTACIWNADEFQRLETHADEFLHVVNTPKISEKEGFQLYDTDIESIKEHIFKLVLESIKVKAEVVSSDERESSLRNLLNFGHSIGHAYEAILTPQALHGECVSIGMVKEAELSRYLGILSATQVARLSKILVAYGLPVSKDEKWFRELTLNKKTPLDTLLKKMSIDKKNDGSKKKVVLLETIGKCYGKSAHVVSDEDLRFVLTDETLVYPFNNIPRDQNKTVTPPGSKSISNRALVLAALGKGTCRIKNLLHSDDTKHMLTAVQELKGANISWEDNGETVVLEGQGGSTLVACENDLYLGNAGTASRFLTSVAALVNSTSQKDHVILTGNARMQQRPIGPLVDSLRNNGIKIDYVKNEGCLPLKVHTDSVFKGGRIELAATVSSQYVSSILMCAPYAENPVTLALVGGKPISILYVEMTIKMMEKFGIKVEKSTTEEYTYIIPKGHYVNPAEYVIESDASSATYPLAFAALTGTTVTVPNIGSASLQGDARFATDVLQPMGCSVTQTATSTTVTGPPVGHLKPLKHVDMEPMTDAFLTACVVAAVAHDNDPTSKNTTTIEGIANQRVKECNRIEAMCTQLAKFGVRTNELPDGIQVHGLHSINDLKVPSIGNEAVGVCTYDDHRVAMSFSLLAGMVNSEQPNSSNPTPVRILERHCTGKTWPGWWDVLHTELGAQLDGAEPLELNSMKNAKKSVVIIGMRAAGKTTISRWCAAALGYKLVDLDTLFEERYGHGMIKDFVSQHGWEKFREEEARIFKEVIENYGDAGYVFSSGGGLVESSESRRILKSFSKSGGYVLHLHRDIEETIMFLQKDPTRPAYVEEIREVWNRRESWYKDCSNFSFFAPHCNSEVEFQNLRRAFTKFIRTITGVTTVDIPTRRSAFVCLTFENLTEYTNSLKAITYGCDAVEVRVDHLSNMDEDFVSKQISILRASTDGLPIIFTVRTKKQGGKFPDEDYETLQKLLITALKVGVDYIDLELTLPIGIQYKVLNMKRNTKIIGSHHDFASAYPWDHSEWENRYNQALAMDVDIVKFVGMAKSFEDNLMLERFRDSHTTKPLIAINMGAHGRVSRVLNTILTPVTSEHLSEVAAPGQLTVAEINRIYTEMGGITKKDFFVVGSPIGHSRSPVLHNTGYSVLGLPHHFDKFETTSAEEVKKHLLDNKANLGGLAVTIPLKLDIIKYMDELTESAKVIGAVNTVIPLGNSKFKGDNTDWLGIRNSLVSNGVPESVSGLSGLVVGAGGTSRAAIFALHKLGCQKIFIVNRTTEKLEELVKFFPEEYNIVPIKEAEEAEAVNETIGVAVNCVPADKPLDAKLESLLERLLLKSSHTHFVSTLVEAAYKPSVTPVMKLAKDKYQWRVVPGAQMLVHQGVAQFETWNNCRAPFKAIYDAVTEI.

A 3-dehydroquinate synthase region spans residues 1–383; sequence MLVKVPILGR…YGKSAHVVSD (383 aa). NAD(+) contacts are provided by residues 40–42, 75–78, 106–108, and aspartate 111; these read DSN, EANK, and GGI. 7-phospho-2-dehydro-3-deoxy-D-arabino-heptonate is bound at residue arginine 122. Residue 131–132 participates in NAD(+) binding; that stretch reads TS. 7-phospho-2-dehydro-3-deoxy-D-arabino-heptonate-binding residues include aspartate 138 and lysine 144. Lysine 153 lines the NAD(+) pocket. Asparagine 154 lines the 7-phospho-2-dehydro-3-deoxy-D-arabino-heptonate pocket. Residues 171-174 and asparagine 182 each bind NAD(+); that span reads WLQS. Position 186 (glutamate 186) interacts with Zn(2+). Residues 186–189 and lysine 249 each bind 7-phospho-2-dehydro-3-deoxy-D-arabino-heptonate; that span reads EVIK. The active-site Proton acceptor; for 3-dehydroquinate synthase activity is the glutamate 259. 7-phospho-2-dehydro-3-deoxy-D-arabino-heptonate contacts are provided by residues 263-267 and histidine 270; that span reads RNLLN. Histidine 270 contacts Zn(2+). Histidine 274 functions as the Proton acceptor; for 3-dehydroquinate synthase activity in the catalytic mechanism. 7-phospho-2-dehydro-3-deoxy-D-arabino-heptonate-binding residues include histidine 286 and lysine 355. Residue histidine 286 participates in Zn(2+) binding. The tract at residues 396–862 is EPSP synthase; it reads VYPFNNIPRD…WDVLHTELGA (467 aa). The active-site For EPSP synthase activity is cysteine 844. The segment at 881 to 1071 is shikimate kinase; it reads SVVIIGMRAA…IPTRRSAFVC (191 aa). 886–893 lines the ATP pocket; that stretch reads GMRAAGKT. Residues 1072–1284 form a 3-dehydroquinase region; sequence LTFENLTEYT…AAPGQLTVAE (213 aa). The active-site Proton acceptor; for 3-dehydroquinate dehydratase activity is histidine 1189. Lysine 1218 acts as the Schiff-base intermediate with substrate; for 3-dehydroquinate dehydratase activity in catalysis. The shikimate dehydrogenase stretch occupies residues 1297 to 1579; it reads KKDFFVVGSP…KAIYDAVTEI (283 aa).

In the N-terminal section; belongs to the sugar phosphate cyclases superfamily. Dehydroquinate synthase family. It in the 2nd section; belongs to the EPSP synthase family. This sequence in the 3rd section; belongs to the shikimate kinase family. The protein in the 4th section; belongs to the type-I 3-dehydroquinase family. In the C-terminal section; belongs to the shikimate dehydrogenase family. In terms of assembly, homodimer. Requires Zn(2+) as cofactor.

Its subcellular location is the cytoplasm. The enzyme catalyses 7-phospho-2-dehydro-3-deoxy-D-arabino-heptonate = 3-dehydroquinate + phosphate. It carries out the reaction 3-dehydroquinate = 3-dehydroshikimate + H2O. The catalysed reaction is shikimate + NADP(+) = 3-dehydroshikimate + NADPH + H(+). It catalyses the reaction shikimate + ATP = 3-phosphoshikimate + ADP + H(+). The enzyme catalyses 3-phosphoshikimate + phosphoenolpyruvate = 5-O-(1-carboxyvinyl)-3-phosphoshikimate + phosphate. Its pathway is metabolic intermediate biosynthesis; chorismate biosynthesis; chorismate from D-erythrose 4-phosphate and phosphoenolpyruvate: step 2/7. It participates in metabolic intermediate biosynthesis; chorismate biosynthesis; chorismate from D-erythrose 4-phosphate and phosphoenolpyruvate: step 3/7. It functions in the pathway metabolic intermediate biosynthesis; chorismate biosynthesis; chorismate from D-erythrose 4-phosphate and phosphoenolpyruvate: step 4/7. The protein operates within metabolic intermediate biosynthesis; chorismate biosynthesis; chorismate from D-erythrose 4-phosphate and phosphoenolpyruvate: step 5/7. Its pathway is metabolic intermediate biosynthesis; chorismate biosynthesis; chorismate from D-erythrose 4-phosphate and phosphoenolpyruvate: step 6/7. The AROM polypeptide catalyzes 5 consecutive enzymatic reactions in prechorismate polyaromatic amino acid biosynthesis. The sequence is that of Pentafunctional AROM polypeptide from Candida glabrata (strain ATCC 2001 / BCRC 20586 / JCM 3761 / NBRC 0622 / NRRL Y-65 / CBS 138) (Yeast).